The primary structure comprises 360 residues: tRNA (guanine-N(7)-)-methyltransferase (360 aa).

A disordered region spans residues 1 to 32 (MTPPPPKRQKRDEYRKATAEAASQPGPSDVAE). S-adenosyl-L-methionine contacts are provided by residues Gly-99 and 122–123 (EI). Residues 177-196 (ADAASPVLSTDTEHTPTTLV) form a disordered region. The segment covering 183–196 (VLSTDTEHTPTTLV) has biased composition (polar residues). Residues 209–210 (NT) and Cys-229 each bind S-adenosyl-L-methionine. Asp-232 is an active-site residue. 332–334 (TEE) provides a ligand contact to S-adenosyl-L-methionine.

The protein belongs to the class I-like SAM-binding methyltransferase superfamily. TrmB family. As to quaternary structure, forms a complex with trm82.

The protein resides in the nucleus. The enzyme catalyses guanosine(46) in tRNA + S-adenosyl-L-methionine = N(7)-methylguanosine(46) in tRNA + S-adenosyl-L-homocysteine. Its pathway is tRNA modification; N(7)-methylguanine-tRNA biosynthesis. In terms of biological role, catalyzes the formation of N(7)-methylguanine at position 46 (m7G46) in tRNA. The protein is tRNA (guanine-N(7)-)-methyltransferase (trm8) of Neosartorya fischeri (strain ATCC 1020 / DSM 3700 / CBS 544.65 / FGSC A1164 / JCM 1740 / NRRL 181 / WB 181) (Aspergillus fischerianus).